The primary structure comprises 809 residues: 3',5'-cyclic-AMP phosphodiesterase 4D (809 aa).

The disordered stretch occupies residues M1–R107. Phosphoserine is present on residues H54, P59, and P63. The span at P58 to G89 shows a compositional bias: pro residues. Over residues A90–G102 the composition is skewed to low complexity. S142, S299, S301, S348, and S375 each carry phosphoserine. A disordered region spans residues E343–I364. The region spanning V386 to S715 is the PDEase domain. A Glycyl lysine isopeptide (Lys-Gly) (interchain with G-Cter in SUMO) cross-link involves residue K387. H462 functions as the Proton donor in the catalytic mechanism. Residue H462 coordinates 3',5'-cyclic AMP. H462 contributes to the AMP binding site. H466, H502, D503, and D620 together coordinate Zn(2+). Residues D503, D620, N623, Q671, and F674 each contribute to the AMP site. Residue D503 participates in Mg(2+) binding. A Mn(2+)-binding site is contributed by D503. Residues Q671 and F674 each contribute to the 3',5'-cyclic AMP site. Disordered regions lie at residues S710 to G729 and T739 to T809. Polar residues predominate over residues C762–S773. Over residues P779–Q796 the composition is skewed to acidic residues.

Belongs to the cyclic nucleotide phosphodiesterase family. PDE4 subfamily. Homodimer for the long isoforms. Isoforms with truncated N-termini are monomeric. Isoform 3 is part of a ternary complex containing PRKAR2A, PRKAR2B and AKAP9. Interacts with PDE4DIP. Identified in a complex composed of RYR1, PDE4D, PKA, FKBP1A and protein phosphatase 1 (PP1). Isoform 5, isoform N3 and isoform 12 bind RACK1 via their unique N-terminus. Binds ARRB2. Interacts (via N-terminal region) with SHANK2 (via proline-rich region); the interaction is increased in a PKA-dependent manner. Zn(2+) serves as cofactor. It depends on Mg(2+) as a cofactor. Requires Mn(2+) as cofactor. Long isoforms that share a conserved PKA phosphorylation site in the N-terminus are activated by PKA through phosphorylation. Isoform 3 and isoform 7 are activated by phosphorylation (in vitro), but not isoform 6. Isoform N3 and isoform 12 are phosphorylated on Ser-49, Ser-51, Ser-55 and Ser-59. Post-translationally, sumoylation of long isoforms by PIAS4 augments their activation by PKA phosphorylation and represses their inhibition by ERK phosphorylation. In terms of tissue distribution, expressed in colonic epithelial cells (at protein level). Widespread; most abundant in skeletal muscle. Detected in brain. As to expression, detected in brain, placenta, lung and kidney. In terms of tissue distribution, detected in heart and skeletal muscle.

Its subcellular location is the apical cell membrane. The protein localises to the cytoplasm. It localises to the membrane. It is found in the cytoskeleton. The protein resides in the microtubule organizing center. Its subcellular location is the centrosome. It catalyses the reaction 3',5'-cyclic AMP + H2O = AMP + H(+). Its pathway is purine metabolism; 3',5'-cyclic AMP degradation; AMP from 3',5'-cyclic AMP: step 1/1. Its activity is regulated as follows. Inhibited by rolipram. Activated by phosphatidic acid. Its function is as follows. Hydrolyzes the second messenger cAMP, which is a key regulator of many important physiological processes. This chain is 3',5'-cyclic-AMP phosphodiesterase 4D, found in Homo sapiens (Human).